Reading from the N-terminus, the 251-residue chain is Probable transcriptional regulatory protein MLBr00475 (251 aa).

It belongs to the TACO1 family.

It localises to the cytoplasm. In Mycobacterium leprae (strain Br4923), this protein is Probable transcriptional regulatory protein MLBr00475.